A 175-amino-acid polypeptide reads, in one-letter code: Urease accessory protein UreE (175 aa).

The disordered stretch occupies residues 151-175; the sequence is GGAYGGSPSHAHRHSHVHSHSHETP. Residues 160–169 are compositionally biased toward basic residues; the sequence is HAHRHSHVHS.

Belongs to the UreE family.

The protein resides in the cytoplasm. In terms of biological role, involved in urease metallocenter assembly. Binds nickel. Probably functions as a nickel donor during metallocenter assembly. The chain is Urease accessory protein UreE from Synechococcus sp. (strain WH7805).